We begin with the raw amino-acid sequence, 515 residues long: Protein aaim-1 (515 aa).

A signal peptide spans 1-16 (MRLLFFFSILYTASLC). N-linked (GlcNAc...) asparagine glycosylation is found at Asn-46 and Asn-127. The disordered stretch occupies residues 248–267 (RRTDPNSKFKPRPTTSQSNG). Asn-447 is a glycosylation site (N-linked (GlcNAc...) asparagine).

As to expression, expressed in the terminal bulb of the pharynx and the posterior of the intestine (at protein level). Expressed by intestinal cells and secreted into the intestinal lumen (at protein level).

The protein localises to the secreted. Plays a role in promoting resistance to bacterial pathogens such as P.aeruginosa by inhibiting bacterial intestinal colonization. Functionally, (Microbial infection) Promotes infection by microsporidian pathogens such as N.parisii in the early larval stages of development. Involved in ensuring the proper orientation and location of the spore proteins of N.parisii during intestinal cell invasion. This Caenorhabditis elegans protein is Protein aaim-1.